A 925-amino-acid chain; its full sequence is Protein translocase subunit SecA (925 aa).

ATP is bound by residues glutamine 87, 105 to 109 (GEGKT), and aspartate 531. The segment at 867–909 (AAGADMRFQHSQPESVLHKPEAGEGEEAQPFRRETPKVGRNDP) is disordered. Residues 895-906 (QPFRRETPKVGR) show a composition bias toward basic and acidic residues. Zn(2+) is bound by residues cysteine 910, cysteine 912, cysteine 921, and histidine 922.

Belongs to the SecA family. In terms of assembly, monomer and homodimer. Part of the essential Sec protein translocation apparatus which comprises SecA, SecYEG and auxiliary proteins SecDF-YajC and YidC. Requires Zn(2+) as cofactor.

Its subcellular location is the cell inner membrane. It localises to the cytoplasm. The enzyme catalyses ATP + H2O + cellular proteinSide 1 = ADP + phosphate + cellular proteinSide 2.. Functionally, part of the Sec protein translocase complex. Interacts with the SecYEG preprotein conducting channel. Has a central role in coupling the hydrolysis of ATP to the transfer of proteins into and across the cell membrane, serving both as a receptor for the preprotein-SecB complex and as an ATP-driven molecular motor driving the stepwise translocation of polypeptide chains across the membrane. This Thioalkalivibrio sulfidiphilus (strain HL-EbGR7) protein is Protein translocase subunit SecA.